A 207-amino-acid polypeptide reads, in one-letter code: Large ribosomal subunit protein uL4 (207 aa).

The disordered stretch occupies residues 44-81 (KRQGTQSAKTRSEVRGGGRKPWRQKGTGRARQGSIRSP). Residues 60–71 (GGRKPWRQKGTG) show a composition bias toward basic residues.

It belongs to the universal ribosomal protein uL4 family. In terms of assembly, part of the 50S ribosomal subunit.

One of the primary rRNA binding proteins, this protein initially binds near the 5'-end of the 23S rRNA. It is important during the early stages of 50S assembly. It makes multiple contacts with different domains of the 23S rRNA in the assembled 50S subunit and ribosome. Its function is as follows. Forms part of the polypeptide exit tunnel. The chain is Large ribosomal subunit protein uL4 from Finegoldia magna (strain ATCC 29328 / DSM 20472 / WAL 2508) (Peptostreptococcus magnus).